We begin with the raw amino-acid sequence, 314 residues long: BURP domain-containing protein 8 (314 aa).

Positions 1–16 are cleaved as a signal peptide; sequence MDLVRLTSLLPPSVMG. One can recognise a BURP domain in the interval 98-314; it reads FFLEKDLFPG…PLGDMLWVRN (217 aa).

Expressed in shoot and panicles.

This is BURP domain-containing protein 8 (BURP8) from Oryza sativa subsp. japonica (Rice).